Reading from the N-terminus, the 266-residue chain is Glutamate racemase (266 aa).

Substrate contacts are provided by residues aspartate 9–serine 10 and tyrosine 41–glycine 42. The Proton donor/acceptor role is filled by cysteine 73. Asparagine 74–serine 75 is a substrate binding site. Cysteine 183 (proton donor/acceptor) is an active-site residue. Threonine 184–histidine 185 serves as a coordination point for substrate.

This sequence belongs to the aspartate/glutamate racemases family.

The catalysed reaction is L-glutamate = D-glutamate. It functions in the pathway cell wall biogenesis; peptidoglycan biosynthesis. Its function is as follows. Provides the (R)-glutamate required for cell wall biosynthesis. This chain is Glutamate racemase, found in Shewanella loihica (strain ATCC BAA-1088 / PV-4).